Consider the following 549-residue polypeptide: Glucose-6-phosphate isomerase (549 aa).

E355 (proton donor) is an active-site residue. Residues H387 and K515 contribute to the active site.

The protein belongs to the GPI family.

The protein resides in the cytoplasm. It carries out the reaction alpha-D-glucose 6-phosphate = beta-D-fructose 6-phosphate. It functions in the pathway carbohydrate biosynthesis; gluconeogenesis. The protein operates within carbohydrate degradation; glycolysis; D-glyceraldehyde 3-phosphate and glycerone phosphate from D-glucose: step 2/4. Functionally, catalyzes the reversible isomerization of glucose-6-phosphate to fructose-6-phosphate. The polypeptide is Glucose-6-phosphate isomerase (Histophilus somni (strain 129Pt) (Haemophilus somnus)).